A 358-amino-acid chain; its full sequence is Vascular endothelial growth factor D (358 aa).

The signal sequence occupies residues 1 to 21 (MYGEWGMGNILMMFHVYLVQG). A propeptide spanning residues 22–93 (FRSEHGPVKD…SRSASHRSTR (72 aa)) is cleaved from the precursor. 3 disulfides stabilise this stretch: cysteine 116–cysteine 158, cysteine 147–cysteine 194, and cysteine 151–cysteine 196. 2 N-linked (GlcNAc...) asparagine glycosylation sites follow: asparagine 160 and asparagine 190. Residues 211–358 (SIQTPEEDEC…AQGLYSQENP (148 aa)) constitute a propeptide that is removed on maturation. The stretch at 227 to 242 (CPIDMLWDNTKCKCVL) is one 1; approximate repeat. The segment at 227–323 (CPIDMLWDNT…PDTCSCEDRC (97 aa)) is 4 X 16 AA repeats of C-X(10)-C-X-C-X(1,3)-C. Tandem repeats lie at residues 263–278 (CGPH…ECVC), 282–298 (CPGD…CFEC), and 306–323 (CQKH…EDRC). An N-linked (GlcNAc...) asparagine glycan is attached at asparagine 292.

Belongs to the PDGF/VEGF growth factor family. Homodimer; non-covalent and antiparallel. Post-translationally, undergoes a complex proteolytic maturation which generates a variety of processed secreted forms with increased activity toward VEGFR-3 and VEGFR-2. VEGF-D first form an antiparallel homodimer linked by disulfide bonds before secretion. The fully processed VEGF-D is composed mostly of two VEGF homology domains (VHDs) bound by non-covalent interactions. Highly expressed in fetal and adult lung.

The protein localises to the secreted. In terms of biological role, growth factor active in angiogenesis, lymphangiogenesis and endothelial cell growth, stimulating their proliferation and migration and also has effects on the permeability of blood vessels. May function in the formation of the venous and lymphatic vascular systems during embryogenesis, and also in the maintenance of differentiated lymphatic endothelium in adults. Binds and activates VEGFR-3 (Flt4) receptor. This is Vascular endothelial growth factor D from Mus musculus (Mouse).